The following is a 369-amino-acid chain: Glutamine synthetase (369 aa).

Positions 23-102 (VIAEYIWVDS…VLAECWNNDG (80 aa)) constitute a GS beta-grasp domain. The 261-residue stretch at 109-369 (HRHEAAKLFE…MSKEFERESS (261 aa)) folds into the GS catalytic domain.

It belongs to the glutamine synthetase family. In terms of assembly, homooctamer.

It is found in the cytoplasm. The catalysed reaction is L-glutamate + NH4(+) + ATP = L-glutamine + ADP + phosphate + H(+). The protein is Glutamine synthetase (GLN1) of Eremothecium gossypii (strain ATCC 10895 / CBS 109.51 / FGSC 9923 / NRRL Y-1056) (Yeast).